Consider the following 86-residue polypeptide: MSKICQITGKKAMIGNNVSHSKRRTKRTFDLNLFNKKFYYVEQDCWISLSLCANGLRIINKKGLDAALNDAVAKGFCDWKSIKVIG.

This sequence belongs to the bacterial ribosomal protein bL28 family.

The chain is Large ribosomal subunit protein bL28 from Bacteroides thetaiotaomicron (strain ATCC 29148 / DSM 2079 / JCM 5827 / CCUG 10774 / NCTC 10582 / VPI-5482 / E50).